Consider the following 338-residue polypeptide: Mitochondrial glutathione transporter SLC25A40 (338 aa).

Solcar repeat units lie at residues 13 to 131, 139 to 223, and 233 to 327; these read VTPL…LTAL, NESR…LKKW, and PTFM…GKSF. A run of 6 helical transmembrane segments spans residues 19 to 39, 103 to 123, 145 to 165, 199 to 220, 239 to 259, and 298 to 318; these read MFAS…FDVV, LWSG…IYFT, IVAG…LELI, WAPT…YEVL, FTSG…FDVV, and GLFT…AVMI.

This sequence belongs to the mitochondrial carrier (TC 2.A.29) family.

Its subcellular location is the mitochondrion inner membrane. It catalyses the reaction glutathione(in) = glutathione(out). In terms of biological role, probable mitochondrial transporter required for glutathione import into mitochondria. Glutathione, which plays key roles in oxidative metabolism, is produced exclusively in the cytosol and is imported in many organelles. Mitochondrial glutathione is required for the activity and stability of proteins containing iron-sulfur clusters, as well as erythropoiesis. The protein is Mitochondrial glutathione transporter SLC25A40 of Bos taurus (Bovine).